Consider the following 324-residue polypeptide: MLNILMTHLINPLAYIVPVLLAVAFLTLIERKVLGYMQLRKGPNVVGPYGLLQPIADGVKLFIKEPVRPSTSSPFLFLAAPVLALTLAMTLWAPMPMPHPVTDLNLGILFILALSSLAVYSILGSGWALNSKYALIGALRAVAQTISYEVSLGLILLSVIIFSGGYTLQTFNITQESIWLLIPAWPLAAMWYISTLAETNRAPFDLTEGESELVSGFNVEYAGGPFALFFLAEYANILLMNTLSAVLFLGASHIPSVPELTTINLMTKAALLSIMFLWVRASYPRFRYDQLMHLVWKNFLPLTLAFVLWHTALPIALAGLPPQL.

A run of 8 helical transmembrane segments spans residues 9 to 29 (LINPLAYIVPVLLAVAFLTLI), 75 to 95 (FLFLAAPVLALTLAMTLWAPM), 106 to 126 (LGILFILALSSLAVYSILGSG), 146 to 166 (ISYEVSLGLILLSVIIFSGGY), 177 to 197 (SIWLLIPAWPLAAMWYISTLA), 228 to 248 (LFFLAEYANILLMNTLSAVLF), 259 to 279 (ELTTINLMTKAALLSIMFLWV), and 299 to 319 (FLPLTLAFVLWHTALPIALAG).

It belongs to the complex I subunit 1 family.

The protein resides in the mitochondrion inner membrane. The enzyme catalyses a ubiquinone + NADH + 5 H(+)(in) = a ubiquinol + NAD(+) + 4 H(+)(out). Core subunit of the mitochondrial membrane respiratory chain NADH dehydrogenase (Complex I) that is believed to belong to the minimal assembly required for catalysis. Complex I functions in the transfer of electrons from NADH to the respiratory chain. The immediate electron acceptor for the enzyme is believed to be ubiquinone. The chain is NADH-ubiquinone oxidoreductase chain 1 (MT-ND1) from Cyprinus carpio (Common carp).